Here is a 228-residue protein sequence, read N- to C-terminus: UPF0173 metal-dependent hydrolase Dred_1740 (228 aa).

The protein belongs to the UPF0173 family.

The polypeptide is UPF0173 metal-dependent hydrolase Dred_1740 (Desulforamulus reducens (strain ATCC BAA-1160 / DSM 100696 / MI-1) (Desulfotomaculum reducens)).